We begin with the raw amino-acid sequence, 636 residues long: Interleukin-27 receptor subunit alpha (636 aa).

Positions 1-32 (MRGGRGAPFWLWPLPKLALLPLLWVLFQRTRP) are cleaved as a signal peptide. Over 33 to 516 (QGSAGPLQCY…HLPDNTLRWK (484 aa)) the chain is Extracellular. N-linked (GlcNAc...) asparagine glycans are attached at residues Asn51 and Asn76. Positions 131 to 231 (PRLGPDVDFS…PILSFQTPPS (101 aa)) constitute a Fibronectin type-III 1 domain. The short motif at 217–221 (WGEWS) is the WSXWS motif element. N-linked (GlcNAc...) asparagine glycosylation is found at Asn302, Asn311, Asn374, Asn382, and Asn467. 2 consecutive Fibronectin type-III domains span residues 322-417 (APRS…LAPL) and 419-511 (GPTL…LPDN). Residues 517–537 (VLPGILFLWGLFLLGCGLSLA) form a helical membrane-spanning segment. Residues 538–636 (TSGRCYHLRH…LGPPRPQVLA (99 aa)) lie on the Cytoplasmic side of the membrane. Residues 554 to 562 (VWEKVPDPA) carry the Box 1 motif motif. The disordered stretch occupies residues 587–636 (EVEEMEPPPVMESSQPAQATAPLDSGYEKHFLPTPEELGLLGPPRPQVLA). Residues 618-628 (LPTPEELGLLG) are compositionally biased toward low complexity.

The protein belongs to the type I cytokine receptor family. Type 2 subfamily. As to quaternary structure, component of a receptor complex composed of IL6ST/GP130, IL27RA/WSX1 and CNTFR which interacts with the neuroprotective peptide humanin. Highly expressed in lymphoid tissues such as spleen, lymph nodes and peripheral blood leukocytes. Weakly expressed in other tissues examined including heart, brain, fetal and adult lung, liver, skeletal muscle, kidney, pancreas, prostate, testis, ovary, small intestine, kidney and colon. In the lymphoid system, higher level expression in CD4+ T-cell subsets than in CD8+ T-cell subsets. Also weaker expression in CD19+ B-cells and monocytes.

Its subcellular location is the membrane. Receptor for IL27. Requires IL6ST/GP130 to mediate signal transduction in response to IL27. This signaling system acts through STAT3 and STAT1. Acts as a receptor for the neuroprotective peptide humanin as part of a complex with IL6ST/GP130 and CNTFR. Involved in the regulation of Th1-type immune responses. Also appears to be involved in innate defense mechanisms. The sequence is that of Interleukin-27 receptor subunit alpha (IL27RA) from Homo sapiens (Human).